The primary structure comprises 207 residues: MSRYRGPRLPIIRRLGELPGFSKKIDRNHTPPGQHGWKKKASDQKKSKESQYGIRLKEKQKLRYNYGINERQLINYVREARRRKGSTGEVLLQLLEMRLDNIIYRLGFAPTIPAARQLINHGHINVNNKNINIPSYICKINDIISVLKNSQQLIKNYLQNGGISELSTCLNLNKEKLEASINNIIPRDLVKLEINELLVIEYYSRKL.

The disordered stretch occupies residues 20 to 52 (GFSKKIDRNHTPPGQHGWKKKASDQKKSKESQY). Residues 40-52 (KASDQKKSKESQY) show a composition bias toward basic and acidic residues. One can recognise an S4 RNA-binding domain in the interval 97–158 (MRLDNIIYRL…NSQQLIKNYL (62 aa)).

This sequence belongs to the universal ribosomal protein uS4 family. Part of the 30S ribosomal subunit. Contacts protein S5. The interaction surface between S4 and S5 is involved in control of translational fidelity.

The protein resides in the plastid. One of the primary rRNA binding proteins, it binds directly to 16S rRNA where it nucleates assembly of the body of the 30S subunit. Functionally, with S5 and S12 plays an important role in translational accuracy. The protein is Small ribosomal subunit protein uS4c (rps4) of Prototheca wickerhamii.